A 306-amino-acid polypeptide reads, in one-letter code: Elongation factor Ts (306 aa).

The tract at residues threonine 81–valine 84 is involved in Mg(2+) ion dislocation from EF-Tu.

This sequence belongs to the EF-Ts family.

Its subcellular location is the cytoplasm. Functionally, associates with the EF-Tu.GDP complex and induces the exchange of GDP to GTP. It remains bound to the aminoacyl-tRNA.EF-Tu.GTP complex up to the GTP hydrolysis stage on the ribosome. The protein is Elongation factor Ts of Polaromonas naphthalenivorans (strain CJ2).